The chain runs to 231 residues: NADH-ubiquinone oxidoreductase chain 4 (231 aa).

The next 6 membrane-spanning stretches (helical) occupy residues 1–21, 34–54, 63–85, 89–111, 128–148, and 156–176; these read PIAG…YGMI, MFMP…LTCL, IAYS…TPWG, AMAL…NTTY, ILPM…AIPP, and FLIM…LGLS.

Belongs to the complex I subunit 4 family.

It is found in the mitochondrion membrane. It catalyses the reaction a ubiquinone + NADH + 5 H(+)(in) = a ubiquinol + NAD(+) + 4 H(+)(out). Functionally, core subunit of the mitochondrial membrane respiratory chain NADH dehydrogenase (Complex I) that is believed to belong to the minimal assembly required for catalysis. Complex I functions in the transfer of electrons from NADH to the respiratory chain. The immediate electron acceptor for the enzyme is believed to be ubiquinone. The polypeptide is NADH-ubiquinone oxidoreductase chain 4 (MT-ND4) (Bothriechis schlegelii (Eyelash palm pitviper)).